The sequence spans 61 residues: Translational regulator CsrA (61 aa).

The protein belongs to the CsrA/RsmA family. In terms of assembly, homodimer; the beta-strands of each monomer intercalate to form a hydrophobic core, while the alpha-helices form wings that extend away from the core.

The protein localises to the cytoplasm. In terms of biological role, a key translational regulator that binds mRNA to regulate translation initiation and/or mRNA stability. Mediates global changes in gene expression, shifting from rapid growth to stress survival by linking envelope stress, the stringent response and the catabolite repression systems. Usually binds in the 5'-UTR; binding at or near the Shine-Dalgarno sequence prevents ribosome-binding, repressing translation, binding elsewhere in the 5'-UTR can activate translation and/or stabilize the mRNA. Its function is antagonized by small RNA(s). In Mannheimia succiniciproducens (strain KCTC 0769BP / MBEL55E), this protein is Translational regulator CsrA.